Reading from the N-terminus, the 435-residue chain is SVGFKAGVKDYKLTYYTPDYQTLDTDILAAFRVTPQPGVPPEEAGAAVAAESSTGTWTTVWTDGLTSLDRYKGRCYHIEPVAGEDNQYIVYVAYPLDLFEEGSVTNMFTSIVGNVFGFKALRALRLEDLRIPPAYSKTFQGPPHGIQVERDKLNKYGRPLLGCTIKPKLGLSAKNYGRAVYECLRGGLDFTKDDENVNSQPFMRWRDRFLFCAEAIFKAQAETGEIKGHYLNATAGTCEEMIKRAVFARELGVPIVMHDYLTGGFTANTSLAHYCRDNGLLLHIHRAMHAVIDRQKNHGIHFRVLAKALRLSGGDHIHSGTVVGKLEGERDITLGFVDLLRDDVIEKDRSRGIYFSQFWVSLPGVLPVASGGIHVWHMPALTEIFGDDSVLQFGGGTLGHPWGNPPGAAANRVALEACVQARNEGQDLAREGNEI.

K5 is modified (N6,N6,N6-trimethyllysine). Substrate-binding residues include N114 and T164. Residue K166 is the Proton acceptor of the active site. Substrate is bound at residue K168. Mg(2+)-binding residues include K192, D194, and E195. K192 bears the N6-carboxylysine mark. The active-site Proton acceptor is the H285. Residues R286, H318, and S370 each coordinate substrate.

Belongs to the RuBisCO large chain family. Type I subfamily. In terms of assembly, heterohexadecamer of 8 large chains and 8 small chains; disulfide-linked. The disulfide link is formed within the large subunit homodimers. Mg(2+) serves as cofactor. Post-translationally, the disulfide bond which can form in the large chain dimeric partners within the hexadecamer appears to be associated with oxidative stress and protein turnover.

The protein resides in the plastid. It localises to the chloroplast. The enzyme catalyses 2 (2R)-3-phosphoglycerate + 2 H(+) = D-ribulose 1,5-bisphosphate + CO2 + H2O. It carries out the reaction D-ribulose 1,5-bisphosphate + O2 = 2-phosphoglycolate + (2R)-3-phosphoglycerate + 2 H(+). RuBisCO catalyzes two reactions: the carboxylation of D-ribulose 1,5-bisphosphate, the primary event in carbon dioxide fixation, as well as the oxidative fragmentation of the pentose substrate in the photorespiration process. Both reactions occur simultaneously and in competition at the same active site. The sequence is that of Ribulose bisphosphate carboxylase large chain from Drosera burmannii (Burmese sundew).